The following is a 378-amino-acid chain: Cytochrome b (378 aa).

The next 4 helical transmembrane spans lie at 34-54 (FGSL…FLAM), 78-99 (WLLR…YLHV), 114-134 (WLVG…GYVL), and 179-199 (FFTF…IHIL). The heme b site is built by His84 and His98. The heme b site is built by His183 and His197. His202 is an a ubiquinone binding site. Helical transmembrane passes span 227 to 247 (FKDI…VLIN), 289 to 309 (LGGV…PFYH), 321 to 341 (INQI…WIGA), and 348 to 368 (YVLV…FNPL).

It belongs to the cytochrome b family. The main subunits of complex b-c1 are: cytochrome b, cytochrome c1 and the Rieske protein. It depends on heme b as a cofactor.

It localises to the mitochondrion inner membrane. In terms of biological role, component of the ubiquinol-cytochrome c reductase complex (complex III or cytochrome b-c1 complex) that is part of the mitochondrial respiratory chain. The b-c1 complex mediates electron transfer from ubiquinol to cytochrome c. Contributes to the generation of a proton gradient across the mitochondrial membrane that is then used for ATP synthesis. In Cochliomyia hominivorax (Primary screw-worm), this protein is Cytochrome b (MT-CYB).